Here is a 636-residue protein sequence, read N- to C-terminus: MSSETLEFQAEARQLLQLMVHSIYSNKDVFLRELISNASDALDKLRLASLRDKDLDVDTADLHIAIEIDPDARTLTVRDNGIGMSRDEVVQVIGTIAKSGTAELLRTLRESADAETSQELIGQFGVGFYAAFMVADRVVLVTREAGATDGTRWESSGEGTYTIASATDAPQGTAVTLHLKPADSEDNLHDYATEWTVRQIVKRYSDFIAHPIRMAVEQPGTDGGESTTEVQTLNSMKALWARSRDEVEPAEYHEFYKHVSHDWADPLEVVHMRGEGTFEYEALLFLPTHAPLDLFSPQGRRGVQLYVKRVFIMDDCEALMPGYLRFVKGVVDAHDLSLNISRELLQQDRQIQVVRRRLVKKILATVKELKANQPEKYRTFWTEFGAVVKEGLIDDTENRDSLLEILSVASTHDPAEPTDLADYVTRMKDGQTDIYYATGENRSTIENSPHMEAFRAKGFEVLLLTDPVDEVWVERVGEYEGKTLRSVAKGQVDLDTEEERSAAEAERERQRTEYADLLTWLSSTLADQVREVRLSARLTTSPACVVGDAHDVTPTLEKMYRAMGHEVPQVKRILELNPTHPLVSGLRKAREQGVTEESLKETAELLYGMALLAEGGELADPSHFTRILAERLARTL.

An a; substrate-binding region spans residues 1–342 (MSSETLEFQA…AHDLSLNISR (342 aa)). The tract at residues 343–558 (ELLQQDRQIQ…AHDVTPTLEK (216 aa)) is b. The interval 559–636 (MYRAMGHEVP…ILAERLARTL (78 aa)) is c.

Belongs to the heat shock protein 90 family. As to quaternary structure, homodimer.

It is found in the cytoplasm. Its function is as follows. Molecular chaperone. Has ATPase activity. The polypeptide is Chaperone protein HtpG (Salinispora tropica (strain ATCC BAA-916 / DSM 44818 / JCM 13857 / NBRC 105044 / CNB-440)).